The following is a 187-amino-acid chain: Ribosome-recycling factor (187 aa).

This sequence belongs to the RRF family.

It localises to the cytoplasm. In terms of biological role, responsible for the release of ribosomes from messenger RNA at the termination of protein biosynthesis. May increase the efficiency of translation by recycling ribosomes from one round of translation to another. This Paracoccus denitrificans (strain Pd 1222) protein is Ribosome-recycling factor.